Here is a 1235-residue protein sequence, read N- to C-terminus: Phosphorylase b kinase regulatory subunit alpha, liver isoform (1235 aa).

S697, S731, and S737 each carry phosphoserine. A calmodulin-binding region spans residues 808–838 (LSELYGKAGLNQEWGLIRYISGLLRKKVEVL). Residues 976–986 (SSASSPAISIH) are compositionally biased toward low complexity. The segment at 976-1002 (SSASSPAISIHEVGHTGVTKTERSGIN) is disordered. Residues S984, S1016, and S1044 each carry the phosphoserine modification. Over residues 1032–1053 (AYSKSVRSSTPSSPTGTSSSDS) the composition is skewed to low complexity. Positions 1032–1060 (AYSKSVRSSTPSSPTGTSSSDSGGHHISW) are disordered. The tract at residues 1059–1099 (SWGERQGQWLRRRRLDGAINRVPVGFYQRVWKILQKCHGLS) is calmodulin-binding. C1232 carries S-farnesyl cysteine lipidation.

Belongs to the phosphorylase b kinase regulatory chain family. In terms of assembly, hexadecamer of 4 heterotetramers, each composed of alpha, beta, gamma, and delta subunits. Alpha (PHKA1 or PHKA2) and beta (PHKB) are regulatory subunits, gamma (PHKG1 or PHKG2) is the catalytic subunit, and delta is calmodulin. Post-translationally, although the final Cys may be farnesylated, the terminal tripeptide is probably not removed, and the C-terminus is not methylated. In terms of tissue distribution, predominantly expressed in liver and other non-muscle tissues.

It is found in the cell membrane. The protein operates within glycan biosynthesis; glycogen metabolism. Its activity is regulated as follows. By phosphorylation of various serine residues and by calcium. Functionally, phosphorylase b kinase catalyzes the phosphorylation of serine in certain substrates, including troponin I. The alpha chain may bind calmodulin. This chain is Phosphorylase b kinase regulatory subunit alpha, liver isoform (PHKA2), found in Oryctolagus cuniculus (Rabbit).